A 130-amino-acid polypeptide reads, in one-letter code: Small ribosomal subunit protein uS11 (130 aa).

The protein belongs to the universal ribosomal protein uS11 family. As to quaternary structure, part of the 30S ribosomal subunit. Interacts with proteins S7 and S18. Binds to IF-3.

Functionally, located on the platform of the 30S subunit, it bridges several disparate RNA helices of the 16S rRNA. Forms part of the Shine-Dalgarno cleft in the 70S ribosome. This is Small ribosomal subunit protein uS11 from Gloeobacter violaceus (strain ATCC 29082 / PCC 7421).